The primary structure comprises 392 residues: Outer membrane protein assembly factor BamB (392 aa).

An N-terminal signal peptide occupies residues 1 to 19 (MQLRKLLLPGLLSVTLLSG). A lipid anchor (N-palmitoyl cysteine) is attached at Cys20. Cys20 carries S-diacylglycerol cysteine lipidation.

It belongs to the BamB family. As to quaternary structure, part of the Bam complex, which is composed of the outer membrane protein BamA, and four lipoproteins BamB, BamC, BamD and BamE.

The protein localises to the cell outer membrane. Part of the outer membrane protein assembly complex, which is involved in assembly and insertion of beta-barrel proteins into the outer membrane. The chain is Outer membrane protein assembly factor BamB from Shigella dysenteriae serotype 1 (strain Sd197).